A 151-amino-acid chain; its full sequence is Ribosome maturation factor RimP (151 aa).

This sequence belongs to the RimP family.

It is found in the cytoplasm. In terms of biological role, required for maturation of 30S ribosomal subunits. The chain is Ribosome maturation factor RimP from Caldanaerobacter subterraneus subsp. tengcongensis (strain DSM 15242 / JCM 11007 / NBRC 100824 / MB4) (Thermoanaerobacter tengcongensis).